A 90-amino-acid chain; its full sequence is Co-chaperonin GroES (90 aa).

The protein belongs to the GroES chaperonin family. As to quaternary structure, heptamer of 7 subunits arranged in a ring. Interacts with the chaperonin GroEL.

The protein localises to the cytoplasm. Functionally, together with the chaperonin GroEL, plays an essential role in assisting protein folding. The GroEL-GroES system forms a nano-cage that allows encapsulation of the non-native substrate proteins and provides a physical environment optimized to promote and accelerate protein folding. GroES binds to the apical surface of the GroEL ring, thereby capping the opening of the GroEL channel. The chain is Co-chaperonin GroES from Helicobacter hepaticus (strain ATCC 51449 / 3B1).